Here is a 349-residue protein sequence, read N- to C-terminus: Phosphoribosylformylglycinamidine cyclo-ligase (349 aa).

This sequence belongs to the AIR synthase family.

It localises to the cytoplasm. It carries out the reaction 2-formamido-N(1)-(5-O-phospho-beta-D-ribosyl)acetamidine + ATP = 5-amino-1-(5-phospho-beta-D-ribosyl)imidazole + ADP + phosphate + H(+). Its pathway is purine metabolism; IMP biosynthesis via de novo pathway; 5-amino-1-(5-phospho-D-ribosyl)imidazole from N(2)-formyl-N(1)-(5-phospho-D-ribosyl)glycinamide: step 2/2. This is Phosphoribosylformylglycinamidine cyclo-ligase from Psychrobacter arcticus (strain DSM 17307 / VKM B-2377 / 273-4).